The chain runs to 380 residues: Alkanesulfonate monooxygenase (380 aa).

It belongs to the SsuD family. In terms of assembly, homotetramer.

The enzyme catalyses an alkanesulfonate + FMNH2 + O2 = an aldehyde + FMN + sulfite + H2O + 2 H(+). Catalyzes the desulfonation of aliphatic sulfonates. This chain is Alkanesulfonate monooxygenase, found in Pectobacterium carotovorum subsp. carotovorum (strain PC1).